A 332-amino-acid chain; its full sequence is MTAIKHPVLLWGLPVAALIIIFWLSLFCYSAIPVSGADATRALLPGHTPTLPEALVQNLRLPRSLVAVLIGASLALAGTLLQTLTHNPMASPSLLGINSGAALAMALTSALSPTPIAGYSLSFIAACGGGVSWLLVMTAGGGFRHTHDRNKLILAGIALSAFCMGLTRITLLLAEDHAYGIFYWLAGGVSHARWQDVWQLLPVVVTAVPVVLLLANQLNLLNLSDSTAHTLGVNLTRLRLVINMLVLLLVGACVSVAGPVAFIGLLVPHLARFWAGFDQRNVLPVSMLLGATLMLLADVLARALAFPGDLPAGAVLALIGSPCFVWLVRRRG.

Residues 1 to 7 (MTAIKHP) lie on the Cytoplasmic side of the membrane. The helical transmembrane segment at 8-28 (VLLWGLPVAALIIIFWLSLFC) threads the bilayer. The Periplasmic portion of the chain corresponds to 29-64 (YSAIPVSGADATRALLPGHTPTLPEALVQNLRLPRS). Residues 65 to 85 (LVAVLIGASLALAGTLLQTLT) form a helical membrane-spanning segment. The Cytoplasmic portion of the chain corresponds to 86–100 (HNPMASPSLLGINSG). A helical transmembrane segment spans residues 101–121 (AALAMALTSALSPTPIAGYSL). A topological domain (periplasmic) is located at residue Ser122. The chain crosses the membrane as a helical span at residues 123–143 (FIAACGGGVSWLLVMTAGGGF). The Cytoplasmic portion of the chain corresponds to 144–151 (RHTHDRNK). A helical transmembrane segment spans residues 152–172 (LILAGIALSAFCMGLTRITLL). Over 173–199 (LAEDHAYGIFYWLAGGVSHARWQDVWQ) the chain is Periplasmic. Residues 200–220 (LLPVVVTAVPVVLLLANQLNL) form a helical membrane-spanning segment. Over 221–244 (LNLSDSTAHTLGVNLTRLRLVINM) the chain is Cytoplasmic. A helical transmembrane segment spans residues 245–265 (LVLLLVGACVSVAGPVAFIGL). Residues 266 to 307 (LVPHLARFWAGFDQRNVLPVSMLLGATLMLLADVLARALAFP) are Periplasmic-facing. The chain crosses the membrane as a helical span at residues 308–328 (GDLPAGAVLALIGSPCFVWLV). Residues 329 to 332 (RRRG) lie on the Cytoplasmic side of the membrane.

Belongs to the binding-protein-dependent transport system permease family. FecCD subfamily. As to quaternary structure, the complex is composed of two ATP-binding proteins (FecE), two transmembrane proteins (FecC and FecD) and a solute-binding protein (FecB). Interacts with FecB.

Its subcellular location is the cell inner membrane. In terms of biological role, part of the ABC transporter complex FecBCDE involved in citrate-dependent Fe(3+) uptake. Probably responsible for the translocation of the substrate across the membrane. The protein is Fe(3+) dicitrate transport system permease protein FecC of Escherichia coli (strain K12).